Reading from the N-terminus, the 341-residue chain is Thymidine kinase (341 aa).

ATP is bound at residue glycine 19–threonine 26. Glutamate 48 (proton acceptor) is an active-site residue. Tyrosine 66 and glutamine 90 together coordinate substrate. Residue arginine 183 coordinates ATP. Substrate is bound at residue arginine 189.

This sequence belongs to the herpesviridae thymidine kinase family. In terms of assembly, homodimer.

It catalyses the reaction thymidine + ATP = dTMP + ADP + H(+). In terms of biological role, catalyzes the transfer of the gamma-phospho group of ATP to thymidine to generate dTMP in the salvage pathway of pyrimidine synthesis. The dTMP serves as a substrate for DNA polymerase during viral DNA replication. Allows the virus to be reactivated and to grow in non-proliferative cells lacking a high concentration of phosphorylated nucleic acid precursors. The chain is Thymidine kinase from Varicella-zoster virus (strain Oka vaccine) (HHV-3).